The following is a 475-amino-acid chain: Fez family zinc finger protein 1 (475 aa).

The short motif at 28 to 43 (PLAFSIERIMARTPEP) is the Engrailed homology 1 repressor element. 6 C2H2-type zinc fingers span residues 260–282 (FTCE…MPVH), 288–310 (FVCK…KIIH), 316–338 (HKCN…TRIH), 344–366 (FVCE…KLTH), 372–394 (FKCN…MHTH), and 400–423 (FTCP…RKLH). Positions 428 to 475 (GLARTPAGEPGTEPPPPLPQQPPMTLPPLQPPLPTPGPLQPGLHQGHQ) are disordered. Over residues 439–466 (TEPPPPLPQQPPMTLPPLQPPLPTPGPL) the composition is skewed to pro residues.

This sequence belongs to the krueppel C2H2-type zinc-finger protein family. As to expression, expressed in brain. Little or no expression in other tissues. Overexpressed specifically in gastric cancers. A 2- to 20-fold increase is found in over 50% of gastric cancer tissues.

The protein localises to the nucleus. Transcription repressor. Involved in the axonal projection and proper termination of olfactory sensory neurons (OSN). Plays a role in rostro-caudal patterning of the diencephalon and in prethalamic formation. Expression is required in OSN to cell-autonomously regulate OSN axon projections. Regulates non-cell-autonomously the layer formation of the olfactory bulb development and the interneurons. May be required for correct rostral migration of the interneuron progenitors. The polypeptide is Fez family zinc finger protein 1 (FEZF1) (Homo sapiens (Human)).